We begin with the raw amino-acid sequence, 349 residues long: Phloroglucinol synthase (349 aa).

Residue C138 is part of the active site.

The protein belongs to the thiolase-like superfamily. Chalcone/stilbene synthases family.

The enzyme catalyses 3 malonyl-CoA + 3 H(+) = 1,3,5-trihydroxybenzene + 3 CO2 + 3 CoA. It functions in the pathway antibiotic biosynthesis. Its function is as follows. Type III polyketide synthase that catalyzes the synthesis of phloroglucinol from three molecules of malonyl-CoA. In addition to its ability to produce phloroglucinol from malonyl-CoA, it exhibits broad substrate specificity, accepting C4-C12 aliphatic acyl-CoAs and phenylacetyl-CoA as the starters to form C6-polyoxoalkylated alpha-pyrones from sequential condensation with malonyl-CoA. The polypeptide is Phloroglucinol synthase (Pseudomonas fluorescens (strain ATCC BAA-477 / NRRL B-23932 / Pf-5)).